Here is a 600-residue protein sequence, read N- to C-terminus: Glutamine--fructose-6-phosphate aminotransferase [isomerizing] (600 aa).

Catalysis depends on Cys2, which acts as the Nucleophile; for GATase activity. One can recognise a Glutamine amidotransferase type-2 domain in the interval 2-217; it reads CGIVGYIGQN…DKEIVLVSRN (216 aa). SIS domains are found at residues 283-422 and 452-590; these read IRTA…VKGL and LARD…VDKP. Lys595 serves as the catalytic For Fru-6P isomerization activity.

Homodimer.

It is found in the cytoplasm. The catalysed reaction is D-fructose 6-phosphate + L-glutamine = D-glucosamine 6-phosphate + L-glutamate. Catalyzes the first step in hexosamine metabolism, converting fructose-6P into glucosamine-6P using glutamine as a nitrogen source. This is Glutamine--fructose-6-phosphate aminotransferase [isomerizing] from Oceanobacillus iheyensis (strain DSM 14371 / CIP 107618 / JCM 11309 / KCTC 3954 / HTE831).